We begin with the raw amino-acid sequence, 245 residues long: Probable phosphatase Spro_1934 (245 aa).

Zn(2+) contacts are provided by His-7, His-9, His-15, His-40, Glu-73, His-101, His-131, Asp-192, and His-194.

Belongs to the PHP family. Homotrimer. Zn(2+) serves as cofactor.

The protein is Probable phosphatase Spro_1934 of Serratia proteamaculans (strain 568).